A 61-amino-acid chain; its full sequence is Temporin-1Tb (61 aa).

The N-terminal stretch at 1–22 (MFTLKKSLLLLFFLGTINLSLC) is a signal peptide. A propeptide spanning residues 23–44 (EEERNAEEERRDEPDERDVQVE) is cleaved from the precursor. L59 carries the leucine amide modification.

The protein belongs to the frog skin active peptide (FSAP) family. Temporin subfamily. In terms of assembly, homo-oligomerizes in membranes as homodimers, homotrimers, or even homotetramers. Oligomerizes in presence of LPS. In Gram-positive bacterial mimetic membranes, the aggregation is weakly pronounced, and penetration proceeds more rapidly and is deeper than in Gram-negative bacterial mimetic membranes where aggregation is high. Homo-oligomerization is prevented by temporin-L. Expressed by the skin glands.

It is found in the secreted. The protein localises to the target cell membrane. It localises to the target cell. Its subcellular location is the target cell cytoplasm. Amphipathic alpha-helical antimicrobial peptide with potent activity against Gram-positive bacteria, weak activity against Gram-negative bacteria, and moderate activity against fungi. Mainly acts by causing membrane permeabilization, but is unable to forme pore-like openings. Is also able to penetrate eukaryotic cells (keratinocytes), and kill intracellular S.aureus (both wild-type and MRSA) without injuring host cells. Shows inhibitory effect on biofilm formation of Gram-positive bacteria, but not of Gram-negative bacteria. Shows antiviral activity against herpes simplex virus 1 (HSV-1) by disrupting the viral envelope. Also displays anti-leishmania activity by damaging parasite membrane. Does not show hemolytic activity. Acts synergistically with temporin-L that improves temporin-1Tb activity by preventing its self-association in lipopolysaccharides (LPS). In vitro, promotes cell migration and wound healing. The chain is Temporin-1Tb from Rana temporaria (European common frog).